Consider the following 281-residue polypeptide: Diaminopimelate epimerase (281 aa).

Positions 13, 46, and 66 each coordinate substrate. The active-site Proton donor is the Cys-75. Substrate is bound by residues 76 to 77 (GN), Asn-160, Asn-193, and 211 to 212 (ER). Cys-220 acts as the Proton acceptor in catalysis. Residue 221-222 (GT) participates in substrate binding.

It belongs to the diaminopimelate epimerase family. Homodimer.

Its subcellular location is the cytoplasm. The enzyme catalyses (2S,6S)-2,6-diaminopimelate = meso-2,6-diaminopimelate. It functions in the pathway amino-acid biosynthesis; L-lysine biosynthesis via DAP pathway; DL-2,6-diaminopimelate from LL-2,6-diaminopimelate: step 1/1. Its function is as follows. Catalyzes the stereoinversion of LL-2,6-diaminopimelate (L,L-DAP) to meso-diaminopimelate (meso-DAP), a precursor of L-lysine and an essential component of the bacterial peptidoglycan. The protein is Diaminopimelate epimerase of Acinetobacter baumannii (strain ATCC 17978 / DSM 105126 / CIP 53.77 / LMG 1025 / NCDC KC755 / 5377).